Here is a 181-residue protein sequence, read N- to C-terminus: MMRLKEKYNQSIKPALVKEFDIKNPMLIPVIEKVVISVGAGELAKDQKVLQNVADTISLIAGQKAVITKAKKSVAGFKVREGFPIGVMVTLRKENMYAFLDKLISIALPRVKDFRGLSRDGFDGRGNYNFGLDEQLMFPEVEYDKILRTHGMNISIVTTAQNDKQAQKLLELIGVPFTKGK.

Belongs to the universal ribosomal protein uL5 family. In terms of assembly, part of the 50S ribosomal subunit; part of the 5S rRNA/L5/L18/L25 subcomplex. Contacts the 5S rRNA and the P site tRNA. Forms a bridge to the 30S subunit in the 70S ribosome.

Its function is as follows. This is one of the proteins that bind and probably mediate the attachment of the 5S RNA into the large ribosomal subunit, where it forms part of the central protuberance. In the 70S ribosome it contacts protein S13 of the 30S subunit (bridge B1b), connecting the 2 subunits; this bridge is implicated in subunit movement. Contacts the P site tRNA; the 5S rRNA and some of its associated proteins might help stabilize positioning of ribosome-bound tRNAs. The polypeptide is Large ribosomal subunit protein uL5 (Campylobacter jejuni subsp. doylei (strain ATCC BAA-1458 / RM4099 / 269.97)).